A 1189-amino-acid polypeptide reads, in one-letter code: Phosphatidylinositol 3,4,5-trisphosphate 5-phosphatase 1 (1189 aa).

In terms of domain architecture, SH2 spans 5–101 (WNHGNITRSK…GLVTHLQYPV (97 aa)). A compositionally biased stretch (acidic residues) spans 103 to 117 (LEEEDTGDDPEEDTV). Residues 103–132 (LEEEDTGDDPEEDTVESVVSPPELPPRNIP) are disordered. The SH3-binding 1 motif lies at 124–129 (PELPPR). Residue Ser-243 is modified to Phosphoserine. A disordered region spans residues 870–906 (TERDESSGPKTLKSLTSHDPMKQWEVTSRAPPCSGSS). The NPXY motif 1 motif lies at 912-915 (NPNY). Phosphotyrosine is present on Tyr-915. Residues 922 to 1189 (GPPMPLHVKQ…PGPLGRTAMQ (268 aa)) are disordered. A compositionally biased stretch (polar residues) spans 931-943 (QTLSPDQQPTAWS). Residue Ser-934 is modified to Phosphoserine. Position 944 is a phosphotyrosine (Tyr-944). Ser-960 bears the Phosphoserine mark. Positions 961-971 (PPTPPGQPPIS) are enriched in pro residues. Thr-963 carries the phosphothreonine modification. Residues 969–974 (PISPKK) carry the SH3-binding 2 motif. Ser-971 is modified (phosphoserine). Positions 1016–1030 (MFENPLYGSLSSFPK) are interaction with DAB2. Residues 1019–1022 (NPLY) carry the NPXY motif 2 motif. Phosphotyrosine is present on Tyr-1022. Basic and acidic residues predominate over residues 1033 to 1047 (PRKDQESPKMPRKEP). The SH3-binding 3 motif lies at 1040-1051 (PKMPRKEPPPCP). The segment covering 1134–1145 (PPTPTPRPPLPV) has biased composition (pro residues). Residues 1157–1177 (KGRDYRDNTELPHHGKHRPEE) show a composition bias toward basic and acidic residues.

It belongs to the inositol 1,4,5-trisphosphate 5-phosphatase family. Interacts with tyrosine phosphorylated form of SHC1. Interacts with tyrosine phosphorylated form of DOK1. Interacts with tyrosine phosphorylated form of DOK3. Interacts with tyrosine phosphorylated form of SLAMF1/CD150. Interacts with PTPN11 in response to IL-3. Interacts with receptor EPOR. Interacts with receptors MS4A2/FCER1B and FCER1G. Interacts with receptors FCGR2B and FCGR3. Interacts with receptor FCGR2A, leading to regulate gene expression during the phagocytic process. Interacts with GRB2. Interacts with PLCG1. Interacts with tyrosine kinases SRC and TEC. Interacts with c-Met/MET. Interacts with MILR1 (tyrosine-phosphorylated). Can weakly interact (via NPXY motif 2) with DAB2 (via PID domain); the interaction is impaired by tyrosine phosphorylation of the NPXY motif. Interacts with FCRL3 and FCRL6 (tyrosine phosphorylated form). Interacts (via SH2 domain) with tyrosine phosphorylated KLRC1 (via ITIM). Interacts with MPL/TPOR. In terms of processing, tyrosine phosphorylated by the members of the SRC family after exposure to a diverse array of extracellular stimuli such as cytokines, growth factors, antibodies, chemokines, integrin ligands and hypertonic and oxidative stress. Phosphorylated upon IgG receptor FCGR2B-binding. In terms of tissue distribution, specifically expressed in immune and hematopoietic cells. Expressed in bone marrow and blood cells. Levels vary considerably within this compartment. Present in at least 74% of immature CD34+ cells, whereas within the more mature population of CD33+ cells, it is present in only 10% of cells. Present in the majority of T-cells, while it is present in a minority of B-cells (at protein level).

The protein resides in the cytoplasm. It is found in the cell membrane. It localises to the membrane raft. Its subcellular location is the cytoskeleton. The protein localises to the membrane. It catalyses the reaction a 1,2-diacyl-sn-glycero-3-phospho-(1D-myo-inositol-3,4,5-trisphosphate) + H2O = a 1,2-diacyl-sn-glycero-3-phospho-(1D-myo-inositol-3,4-bisphosphate) + phosphate. The catalysed reaction is 1D-myo-inositol 1,3,4,5-tetrakisphosphate + H2O = 1D-myo-inositol 1,3,4-trisphosphate + phosphate. The enzyme catalyses a 1,2-diacyl-sn-glycero-3-phospho-(1D-myo-inositol-4,5-bisphosphate) + H2O = a 1,2-diacyl-sn-glycero-3-phospho-(1D-myo-inositol 4-phosphate) + phosphate. Activated upon translocation to the sites of synthesis of PtdIns(3,4,5)P3 in the membrane. Its function is as follows. Phosphatidylinositol (PtdIns) phosphatase that specifically hydrolyzes the 5-phosphate of phosphatidylinositol-3,4,5-trisphosphate (PtdIns(3,4,5)P3) to produce PtdIns(3,4)P2, thereby negatively regulating the PI3K (phosphoinositide 3-kinase) pathways. Able also to hydrolyzes the 5-phosphate of phosphatidylinositol-4,5-bisphosphate (PtdIns(4,5)P3) and inositol 1,3,4,5-tetrakisphosphate. Acts as a negative regulator of B-cell antigen receptor signaling. Mediates signaling from the FC-gamma-RIIB receptor (FCGR2B), playing a central role in terminating signal transduction from activating immune/hematopoietic cell receptor systems. Acts as a negative regulator of myeloid cell proliferation/survival and chemotaxis, mast cell degranulation, immune cells homeostasis, integrin alpha-IIb/beta-3 signaling in platelets and JNK signaling in B-cells. Regulates proliferation of osteoclast precursors, macrophage programming, phagocytosis and activation and is required for endotoxin tolerance. Involved in the control of cell-cell junctions, CD32a signaling in neutrophils and modulation of EGF-induced phospholipase C activity. Key regulator of neutrophil migration, by governing the formation of the leading edge and polarization required for chemotaxis. Modulates FCGR3/CD16-mediated cytotoxicity in NK cells. Mediates the activin/TGF-beta-induced apoptosis through its Smad-dependent expression. In Homo sapiens (Human), this protein is Phosphatidylinositol 3,4,5-trisphosphate 5-phosphatase 1 (INPP5D).